The primary structure comprises 325 residues: GMP reductase (325 aa).

The active-site Thioimidate intermediate is Cys173. 202 to 225 (IIADGGIHEHGDIAKSIRFGATMV) is a binding site for NADP(+).

The protein belongs to the IMPDH/GMPR family. GuaC type 2 subfamily.

The enzyme catalyses IMP + NH4(+) + NADP(+) = GMP + NADPH + 2 H(+). In terms of biological role, catalyzes the irreversible NADPH-dependent deamination of GMP to IMP. It functions in the conversion of nucleobase, nucleoside and nucleotide derivatives of G to A nucleotides, and in maintaining the intracellular balance of A and G nucleotides. The sequence is that of GMP reductase from Albidiferax ferrireducens (strain ATCC BAA-621 / DSM 15236 / T118) (Rhodoferax ferrireducens).